Reading from the N-terminus, the 470-residue chain is UDP-N-acetylmuramoylalanine--D-glutamate ligase (470 aa).

Residue 124–130 coordinates ATP; sequence GTNGKTT.

Belongs to the MurCDEF family.

The protein resides in the cytoplasm. The enzyme catalyses UDP-N-acetyl-alpha-D-muramoyl-L-alanine + D-glutamate + ATP = UDP-N-acetyl-alpha-D-muramoyl-L-alanyl-D-glutamate + ADP + phosphate + H(+). Its pathway is cell wall biogenesis; peptidoglycan biosynthesis. In terms of biological role, cell wall formation. Catalyzes the addition of glutamate to the nucleotide precursor UDP-N-acetylmuramoyl-L-alanine (UMA). This is UDP-N-acetylmuramoylalanine--D-glutamate ligase from Prochlorococcus marinus (strain SARG / CCMP1375 / SS120).